The sequence spans 407 residues: MIGFEIFLAIGMFTAIVLGLVAIILVARAKLVSSGDVTIQINGEHSLTVPAGGKLLQTLAANNVFLSSACGGGGTCAQCKCVVVEGGGEMLPTEESHFTRRQAKEGWRLSCQTPVKQDMQIRVPEEVFGVKKWECTVESNPNVATFIKELTLRLPDGESVDFRAGGYVQLECPPHVVEYKDFDIQPEYRGDWDKFNMWRYVSKVDETVIRAYSMANYPEEKGVVKFNIRIASPPPGSDLPPGQMSSWVFNLKPGDKVTVYGPFGEFFAKDTEAEMVFIGGGAGMAPMRSHIFDQLRRLKSNRKISFWYGARSLREAFYTEEYDQLQAENPNFQWHLALSDPQPEDNWTGLTGFIHNVLFENYLKDHPAPEDCEFYMCGPPMMNAAVIKMLTDLGVERENILLDDFGG.

The chain crosses the membrane as a helical span at residues 6–26 (IFLAIGMFTAIVLGLVAIILV). The region spanning 35–127 (GDVTIQINGE…DMQIRVPEEV (93 aa)) is the 2Fe-2S ferredoxin-type domain. 4 residues coordinate [2Fe-2S] cluster: Cys-70, Cys-76, Cys-79, and Cys-111. The region spanning 130–269 (VKKWECTVES…YGPFGEFFAK (140 aa)) is the FAD-binding FR-type domain. The interval 272-389 (EAEMVFIGGG…PMMNAAVIKM (118 aa)) is catalytic.

The protein belongs to the NqrF family. Composed of six subunits; NqrA, NqrB, NqrC, NqrD, NqrE and NqrF. Requires [2Fe-2S] cluster as cofactor. The cofactor is FAD.

Its subcellular location is the cell inner membrane. The catalysed reaction is a ubiquinone + n Na(+)(in) + NADH + H(+) = a ubiquinol + n Na(+)(out) + NAD(+). Its function is as follows. NQR complex catalyzes the reduction of ubiquinone-1 to ubiquinol by two successive reactions, coupled with the transport of Na(+) ions from the cytoplasm to the periplasm. The first step is catalyzed by NqrF, which accepts electrons from NADH and reduces ubiquinone-1 to ubisemiquinone by a one-electron transfer pathway. This is Na(+)-translocating NADH-quinone reductase subunit F from Pseudomonas aeruginosa (strain ATCC 15692 / DSM 22644 / CIP 104116 / JCM 14847 / LMG 12228 / 1C / PRS 101 / PAO1).